A 356-amino-acid polypeptide reads, in one-letter code: Cytochrome b translation regulator cbp7 (356 aa).

In terms of assembly, component of a complex, at least composed of cbp7 and cbp8.

It is found in the mitochondrion. Functionally, translation factor for cob1/cytochrome b; plays a role in cob1 mRNA stabilization and required for correct folding of the protein. The sequence is that of Cytochrome b translation regulator cbp7 from Schizosaccharomyces pombe (strain 972 / ATCC 24843) (Fission yeast).